The sequence spans 434 residues: Putative F-box/FBD/LRR-repeat protein At1g16940 (434 aa).

Positions 10 to 66 (HNIINQLPDSLLCEIFFNLPTEEVVKTSLICRRWRYVWQSLPGLDLVINGSKNYDKF) constitute an F-box domain. LRR repeat units lie at residues 72 to 99 (FMFL…MMNN), 114 to 141 (RRYV…KLHR), 164 to 189 (INFV…TMDK), 204 to 231 (CLTN…KLNR), 252 to 277 (DVAY…TISF), and 306 to 331 (MAVG…VMGF). The 50-residue stretch at 336–385 (WGINFSDVPQCVLSSLEFVEVKAREVADMKKLWSYFMENSTVLKKFTLCL) folds into the FBD domain.

The sequence is that of Putative F-box/FBD/LRR-repeat protein At1g16940 from Arabidopsis thaliana (Mouse-ear cress).